The following is a 235-amino-acid chain: 7-cyano-7-deazaguanine synthase (235 aa).

Residue 10-20 (FSGGQDSTTCL) coordinates ATP. Cys198, Cys213, Cys216, and Cys219 together coordinate Zn(2+).

It belongs to the QueC family. Zn(2+) is required as a cofactor.

The enzyme catalyses 7-carboxy-7-deazaguanine + NH4(+) + ATP = 7-cyano-7-deazaguanine + ADP + phosphate + H2O + H(+). Its pathway is purine metabolism; 7-cyano-7-deazaguanine biosynthesis. In terms of biological role, catalyzes the ATP-dependent conversion of 7-carboxy-7-deazaguanine (CDG) to 7-cyano-7-deazaguanine (preQ(0)). This Paracidovorax citrulli (strain AAC00-1) (Acidovorax citrulli) protein is 7-cyano-7-deazaguanine synthase.